Here is a 275-residue protein sequence, read N- to C-terminus: Large ribosomal subunit protein uL2 (275 aa).

The interval 224–275 (AMNPVDHPHGGGEGKAPIGHPGPLTPWGKPALGYKTRKKGKASDKFIIRRRK) is disordered. The span at 264–275 (KASDKFIIRRRK) shows a compositional bias: basic and acidic residues.

Belongs to the universal ribosomal protein uL2 family. Part of the 50S ribosomal subunit. Forms a bridge to the 30S subunit in the 70S ribosome.

One of the primary rRNA binding proteins. Required for association of the 30S and 50S subunits to form the 70S ribosome, for tRNA binding and peptide bond formation. It has been suggested to have peptidyltransferase activity; this is somewhat controversial. Makes several contacts with the 16S rRNA in the 70S ribosome. The protein is Large ribosomal subunit protein uL2 of Thermoanaerobacter pseudethanolicus (strain ATCC 33223 / 39E) (Clostridium thermohydrosulfuricum).